A 285-amino-acid polypeptide reads, in one-letter code: HTH-type transcriptional regulator MurR (285 aa).

Residues 1–77 (MLYLTKISNA…MALIGEYSAS (77 aa)) form the HTH rpiR-type domain. Positions 37 to 56 (SRQMAKQLGISQSSIVKFAQ) form a DNA-binding region, H-T-H motif. The SIS domain maps to 128–268 (IIDVISKAQF…FVGLVQLNDV (141 aa)).

As to quaternary structure, homotetramer.

It functions in the pathway amino-sugar metabolism; N-acetylmuramate degradation [regulation]. Represses the expression of the murPQ operon involved in the uptake and degradation of N-acetylmuramic acid (MurNAc). Binds to two adjacent inverted repeats within the operator region. MurNAc 6-phosphate, the substrate of MurQ, is the specific inducer that weakens binding of MurR to the operator. In Escherichia coli (strain B / BL21-DE3), this protein is HTH-type transcriptional regulator MurR.